The sequence spans 164 residues: Large ribosomal subunit protein eL21x/eL21w (164 aa).

This sequence belongs to the eukaryotic ribosomal protein eL21 family.

The polypeptide is Large ribosomal subunit protein eL21x/eL21w (RPL21E) (Arabidopsis thaliana (Mouse-ear cress)).